An 833-amino-acid chain; its full sequence is DNA ligase (833 aa).

Residues 35–39 (DADYD), 84–85 (SL), and E115 contribute to the NAD(+) site. K117 functions as the N6-AMP-lysine intermediate in the catalytic mechanism. NAD(+) contacts are provided by R138, E175, K292, and K316. C410, C413, C428, and C434 together coordinate Zn(2+). The BRCT domain occupies 750–833 (LQTGPLDGQT…AFLGDHGQQP (84 aa)).

Belongs to the NAD-dependent DNA ligase family. LigA subfamily. Mg(2+) serves as cofactor. Mn(2+) is required as a cofactor.

The enzyme catalyses NAD(+) + (deoxyribonucleotide)n-3'-hydroxyl + 5'-phospho-(deoxyribonucleotide)m = (deoxyribonucleotide)n+m + AMP + beta-nicotinamide D-nucleotide.. DNA ligase that catalyzes the formation of phosphodiester linkages between 5'-phosphoryl and 3'-hydroxyl groups in double-stranded DNA using NAD as a coenzyme and as the energy source for the reaction. It is essential for DNA replication and repair of damaged DNA. This Xanthomonas euvesicatoria pv. vesicatoria (strain 85-10) (Xanthomonas campestris pv. vesicatoria) protein is DNA ligase.